The sequence spans 391 residues: 3-ketoacyl-CoA thiolase, peroxisomal (391 aa).

The active-site Acyl-thioester intermediate is cysteine 92. Residues histidine 335 and cysteine 366 each act as proton acceptor in the active site.

This sequence belongs to the thiolase-like superfamily. Thiolase family. As to quaternary structure, homodimer.

It is found in the peroxisome. The catalysed reaction is an acyl-CoA + acetyl-CoA = a 3-oxoacyl-CoA + CoA. The protein operates within lipid metabolism; fatty acid metabolism. The protein is 3-ketoacyl-CoA thiolase, peroxisomal (FOX3) of Encephalitozoon cuniculi (strain GB-M1) (Microsporidian parasite).